We begin with the raw amino-acid sequence, 1039 residues long: MEGFTLETHASRIIEVPLLGQEDQSVEIDCSSLPSDATELCEILVNEQAPREFWTKFAHEYYIRGLREQAILILKSGLETLKDSESLCILNANIAAIYLSMAREAMLKKDTDLRDEQLRNVRTYLEAANNIDSKSEINVLLHGIYRILLNPTDKESLENAARCFDFVLQKSGGNILGFLGKARILYAKGNYRSALKLYQRALVSNPQFKPDPRIGIGLCFWNLDMKTDALSAWTRVQQLDPKNTVVDTYIGLYYYDLAFQNVNNDSFVQNYGKALQHIQRAFKTRNNDPVASSILERYVYSKKNYEGCIKLAENVIQNSFSSSLIADGYYWMGRAYHQMGNNEKAMASYQKAKAADDRHLLSSVGIGQIQILQNDLTSAKLTFERIAEQNQSCFEALVVLGCLHASDSKPDLTKARMLLDRAFNLVGSSKLPRVVDSDLYITQARLWEKEDTKKSLGFLTRALDFLESAHMSVGPELLNNIAVLQYHLGLIPEAHGNIIKAKSVLPDANPELSLLLDYNLARCEEELGNTSVASEAYVSILEKHPSFIDARIRKCLLQLSNPNEETFKEIRHIMNADSQNLEVRAFFGWYLSKQKRRPVEDPEVRHCSQTLRHWHDDIYSLVQLGNAYMRQAREFRVHNDREKLKRQKLYIKAIQSYDQAIKFDPKNAHAAQGIAIILAQNRQFSKALLILSKVREAIKDATTLINIGNCLAELKQFSRAIEVFETVYSSTGESDTYGVLSCLGRVWLQRGRESKNVDYLKESVRYATLALEKNPENPSLLFNVAFVQFQLCELIRQKPENSRTVEDLNFAMQQLDASIETFTKLVSVEHPPYSPTSIEQRAKMAKNTTKRQLERAIQAQIEYEKSVAAKLEDARIQREKEKARRLAEEEALLKEKQERERQLQEERQKMQEEVLEWRKSQQKASEDDMSLSDDEEKQSGKKKKKDRKKRKSKSKQESSDSGVSEDDEIPLSDARNKTKKRRVNRRVISEEYTFDQDSDAEGNQEEEVSRTIEEKQDNDITDNQDDNKELNLFSEEDEE.

12 TPR repeats span residues 51–84, 175–208, 210–243, 251–288, 326–359, 361–393, 437–469, 514–547, 634–667, 701–734, 737–770, and 799–832; these read REFW…LKDS, ILGF…NPQF, PDPR…DPKN, GLYY…RNND, ADGY…DDRH, LSSV…NQSC, SDLY…LESA, LLLD…HPSF, EFRV…DPKN, ATTL…TGES, YGVL…ATLA, and PENS…EHPP. A coiled-coil region spans residues 838 to 929; the sequence is IEQRAKMAKN…SQQKASEDDM (92 aa). Residues 912–1039 form a disordered region; it reads EEVLEWRKSQ…LNLFSEEDEE (128 aa). The span at 927-936 shows a compositional bias: acidic residues; the sequence is DDMSLSDDEE. A phosphoserine mark is found at Ser930 and Ser932. The segment covering 940–953 has biased composition (basic residues); sequence GKKKKKDRKKRKSK. Ser959, Ser961, Ser964, and Ser998 each carry phosphoserine. Positions 992-1006 are enriched in acidic residues; the sequence is YTFDQDSDAEGNQEE. Residues 1007–1018 are compositionally biased toward basic and acidic residues; sequence EVSRTIEEKQDN.

In terms of biological role, involved in promoting potassiumm ion uptake. This is Tetratricopeptide repeat protein 1 (tpr1) from Schizosaccharomyces pombe (strain 972 / ATCC 24843) (Fission yeast).